We begin with the raw amino-acid sequence, 415 residues long: UV excision repair protein RAD23 homolog B (415 aa).

A Ubiquitin-like domain is found at Met1 to Ala79. The tract at residues Val80 to Asn175 is disordered. The span at Val84–Thr143 shows a compositional bias: low complexity. Thr155 is modified (phosphothreonine). Ser160 and Ser174 each carry phosphoserine. Thr186 is modified (phosphothreonine). Residues Gln188–Gly228 form the UBA 1 domain. At Ser199 the chain carries Phosphoserine. Tyr202 bears the Phosphotyrosine mark. Residues His274 to Ile317 form the STI1 domain. The interval Glu334–Ile355 is disordered. Positions Gly336–Ile355 are enriched in gly residues. The 41-residue stretch at Pro370 to Gln410 folds into the UBA 2 domain.

This sequence belongs to the RAD23 family. Component of the XPC complex composed of XPC, RAD23B and CETN2. Interacts with NGLY1 and PSMC1. Interacts with ATXN3. Interacts with AMFR. Interacts with VCP; the interaction is indirect and mediated by NGLY1.

It localises to the nucleus. It is found in the cytoplasm. Multiubiquitin chain receptor involved in modulation of proteasomal degradation. Binds to polyubiquitin chains. Proposed to be capable to bind simultaneously to the 26S proteasome and to polyubiquitinated substrates and to deliver ubiquitinated proteins to the proteasome. May play a role in endoplasmic reticulum-associated degradation (ERAD) of misfolded glycoproteins by association with PNGase and delivering deglycosylated proteins to the proteasome. In terms of biological role, involved in global genome nucleotide excision repair (GG-NER) by acting as component of the XPC complex. Cooperatively with Cetn2 appears to stabilize Xpc. May protect Xpc from proteasomal degradation. Its function is as follows. The XPC complex is proposed to represent the first factor bound at the sites of DNA damage and together with other core recognition factors, Xpa, RPA and the TFIIH complex, is part of the pre-incision (or initial recognition) complex. The XPC complex recognizes a wide spectrum of damaged DNA characterized by distortions of the DNA helix such as single-stranded loops, mismatched bubbles or single-stranded overhangs. The orientation of XPC complex binding appears to be crucial for inducing a productive NER. XPC complex is proposed to recognize and to interact with unpaired bases on the undamaged DNA strand which is followed by recruitment of the TFIIH complex and subsequent scanning for lesions in the opposite strand in a 5'-to-3' direction by the NER machinery. Cyclobutane pyrimidine dimers (CPDs) which are formed upon UV-induced DNA damage esacpe detection by the XPC complex due to a low degree of structural perurbation. Instead they are detected by the UV-DDB complex which in turn recruits and cooperates with the XPC complex in the respective DNA repair. In vitro, the XPC:RAD23B dimer is sufficient to initiate NER; it preferentially binds to cisplatin and UV-damaged double-stranded DNA and also binds to a variety of chemically and structurally diverse DNA adducts. XPC:RAD23B contacts DNA both 5' and 3' of a cisplatin lesion with a preference for the 5' side. Xpc:Rad22b induces a bend in DNA upon binding. Xpc:Rad23b stimulates the activity of DNA glycosylases Tdg and Smug1. This chain is UV excision repair protein RAD23 homolog B (Rad23b), found in Rattus norvegicus (Rat).